A 340-amino-acid polypeptide reads, in one-letter code: Protein-arginine kinase (340 aa).

Residues 21-242 enclose the Phosphagen kinase C-terminal domain; the sequence is VVLSSRIRLA…EQIIMQERVA (222 aa). Residues 24-28, His-79, Arg-113, 164-168, and 195-200 each bind ATP; these read SSRIR, RASVM, and RGIYGE.

It belongs to the ATP:guanido phosphotransferase family.

It catalyses the reaction L-arginyl-[protein] + ATP = N(omega)-phospho-L-arginyl-[protein] + ADP + H(+). In terms of biological role, catalyzes the specific phosphorylation of arginine residues in proteins. The polypeptide is Protein-arginine kinase (Listeria welshimeri serovar 6b (strain ATCC 35897 / DSM 20650 / CCUG 15529 / CIP 8149 / NCTC 11857 / SLCC 5334 / V8)).